The chain runs to 354 residues: Arginase-2, mitochondrial (354 aa).

The N-terminal 22 residues, 1 to 22, are a transit peptide targeting the mitochondrion; that stretch reads MSLRGSLSRLLQTRVHSILKKS. Mn(2+) is bound by residues His-120, Asp-143, His-145, and Asp-147. Residues 145-149, 156-158, and Asp-202 contribute to the substrate site; these read HADIN and SGN. 2 residues coordinate Mn(2+): Asp-251 and Asp-253. Thr-265 and Glu-296 together coordinate substrate. The disordered stretch occupies residues 334 to 354; sequence YDQLPTPSSPDESENQARVRI.

It belongs to the arginase family. As to quaternary structure, homotrimer. Requires Mn(2+) as cofactor. In terms of tissue distribution, expressed most strongly in kidney and prostate, much less strongly in the brain, skeletal muscle, placenta, lung, mammary gland, macrophage, uterus, testis and gut, but apparently not in the liver, heart and pancreas. Expressed in activated T cells.

The protein localises to the mitochondrion. The enzyme catalyses L-arginine + H2O = urea + L-ornithine. The protein operates within nitrogen metabolism; urea cycle; L-ornithine and urea from L-arginine: step 1/1. May play a role in the regulation of extra-urea cycle arginine metabolism and also in down-regulation of nitric oxide synthesis. Extrahepatic arginase functions to regulate L-arginine bioavailability to nitric oxid synthase (NOS). Arginine metabolism is a critical regulator of innate and adaptive immune responses. Seems to be involved in negative regulation of the survival capacity of activated CD4(+) and CD8(+) T cells. May suppress inflammation-related signaling in asthmatic airway epithelium. May contribute to the immune evasion of H.pylori by restricting M1 macrophage activation and polyamine metabolism. In fetal dendritic cells may play a role in promoting immune suppression and T cell TNF-alpha production during gestation. Regulates RPS6KB1 signaling, which promotes endothelial cell senescence and inflammation and implicates NOS3/eNOS dysfunction. Can inhibit endothelial autophagy independently of its enzymatic activity implicating mTORC2 signaling. Involved in vascular smooth muscle cell senescence and apoptosis independently of its enzymatic activity. Since NOS is found in the penile corpus cavernosum smooth muscle, the clitoral corpus cavernosum and the vagina, arginase-2 plays a role in both male and female sexual arousal. This Homo sapiens (Human) protein is Arginase-2, mitochondrial (ARG2).